We begin with the raw amino-acid sequence, 106 residues long: Phosphoribosyl-ATP pyrophosphatase (106 aa).

It belongs to the PRA-PH family.

The protein resides in the cytoplasm. It catalyses the reaction 1-(5-phospho-beta-D-ribosyl)-ATP + H2O = 1-(5-phospho-beta-D-ribosyl)-5'-AMP + diphosphate + H(+). The protein operates within amino-acid biosynthesis; L-histidine biosynthesis; L-histidine from 5-phospho-alpha-D-ribose 1-diphosphate: step 2/9. The chain is Phosphoribosyl-ATP pyrophosphatase from Limosilactobacillus fermentum (strain NBRC 3956 / LMG 18251) (Lactobacillus fermentum).